The chain runs to 206 residues: Putative acetyltransferase OgpAT (206 aa).

In terms of domain architecture, N-acetyltransferase spans 5 to 205 (VVIRRATAAD…EVVVGRRLLD (201 aa)). Acetyl-CoA is bound by residues 135–138 (HIDL), 144–148 (GRGVG), 175–177 (NPR), and His-184.

The protein belongs to the acetyltransferase family. In terms of assembly, monomer.

Its function is as follows. Binds acetyl-CoA, but not butyryl-CoA or decanoyl-CoA. May have acetyltransferase activity. The chain is Putative acetyltransferase OgpAT from Oceanicola granulosus (strain ATCC BAA-861 / DSM 15982 / KCTC 12143 / HTCC2516).